The chain runs to 638 residues: Rik1-associated factor 1 (638 aa).

4 WD repeats span residues 297-336 (KEYS…CGIF), 486-525 (TTQK…KPLS), 544-583 (EVDA…PFIQ), and 587-626 (EMNS…GNKF).

As to quaternary structure, component of the Clr4 methyltransferase complex (ClrC) composed of at least clr4, rik1, pcu4, rbx1, raf1 and raf2. The cullin pcu4, rik1, raf1, raf2 and the ring-box protein rbx1 are components of an E3 ubiquitin ligase, whose activity is essential for heterochromatin assembly. Interacts with nup189.

Its subcellular location is the cytoplasm. It localises to the nucleus. It is found in the chromosome. Its function is as follows. Component of the Clr4 methyltransferase complex (ClrC) which contributes to the establishment of heterochromatin by specifically methylating histone H3 to form H3K9me. ClrC preferentially ubiquitylates H3K14 and ClrC-mediated H3 ubiquitination promotes clr4 methyltransferase activity for the methylation of H3K9. H3K9me represents a specific tag for epigenetic transcriptional repression by recruiting swi6/HP1 to methylated histones which leads to transcriptional silencing within centromeric heterochromatin, telomeric regions and at the silent mating-type loci. Has a role in both mitotic and meiotic chromosome segregation. The polypeptide is Rik1-associated factor 1 (raf1) (Schizosaccharomyces pombe (strain 972 / ATCC 24843) (Fission yeast)).